The chain runs to 369 residues: sn-glycerol-3-phosphate import ATP-binding protein UgpC (369 aa).

The ABC transporter domain occupies 4-235 (LSLRNVQKTY…PASTFVAGFI (232 aa)). 37-44 (GPSGCGKS) provides a ligand contact to ATP.

It belongs to the ABC transporter superfamily. sn-glycerol-3-phosphate importer (TC 3.A.1.1.3) family. In terms of assembly, the complex is composed of two ATP-binding proteins (UgpC), two transmembrane proteins (UgpA and UgpE) and a solute-binding protein (UgpB).

The protein resides in the cell inner membrane. The enzyme catalyses sn-glycerol 3-phosphate(out) + ATP + H2O = sn-glycerol 3-phosphate(in) + ADP + phosphate + H(+). Part of the ABC transporter complex UgpBAEC involved in sn-glycerol-3-phosphate (G3P) import. Responsible for energy coupling to the transport system. In Cupriavidus pinatubonensis (strain JMP 134 / LMG 1197) (Cupriavidus necator (strain JMP 134)), this protein is sn-glycerol-3-phosphate import ATP-binding protein UgpC.